We begin with the raw amino-acid sequence, 131 residues long: Protein yippee-like PJ691.02 (131 aa).

The Yippee domain occupies 12-109 (RCYVCAKCKT…LEMQDAVLQR (98 aa)). Zn(2+)-binding residues include Cys16, Cys19, Cys72, and Cys75.

The protein belongs to the yippee family.

The sequence is that of Protein yippee-like PJ691.02 from Schizosaccharomyces pombe (strain 972 / ATCC 24843) (Fission yeast).